The chain runs to 63 residues: MPKMKTKKSLAKRVTVKSNGTLKRAKAYRSHRATGKTTKQKRQLSKATIISKVDMKNLKGLLQ.

A disordered region spans residues 24–44 (RAKAYRSHRATGKTTKQKRQL).

Belongs to the bacterial ribosomal protein bL35 family.

This is Large ribosomal subunit protein bL35 from Mycoplasma mycoides subsp. mycoides SC (strain CCUG 32753 / NCTC 10114 / PG1).